The primary structure comprises 149 residues: Gamma-glutamylaminecyclotransferase (149 aa).

Residue 7 to 10 (YGTL) participates in substrate binding. Glutamate 82 (proton acceptor) is an active-site residue.

This sequence belongs to the gamma-glutamylcyclotransferase family. As to quaternary structure, monomer.

It catalyses the reaction epsilon-(gamma-L-glutamyl)-L-lysine = 5-oxo-L-proline + L-lysine. Its function is as follows. Contributes to degradation of proteins cross-linked by transglutaminases by degrading the cross-link between a lysine and a glutamic acid residue. Catalyzes the formation of 5-oxo-L-proline from L-gamma-glutamyl-L-epsilon-lysine. Inactive with L-gamma-glutamyl-alpha-amino acid substrates such as L-gamma-glutamyl-L-alpha-cysteine and L-gamma-glutamyl-L-alpha-alanine. The chain is Gamma-glutamylaminecyclotransferase (Ggact) from Rattus norvegicus (Rat).